Reading from the N-terminus, the 287-residue chain is Bifunctional protein FolD (287 aa).

NADP(+) contacts are provided by residues 160–162 (GRS), serine 189, and threonine 230.

This sequence belongs to the tetrahydrofolate dehydrogenase/cyclohydrolase family. Homodimer.

The enzyme catalyses (6R)-5,10-methylene-5,6,7,8-tetrahydrofolate + NADP(+) = (6R)-5,10-methenyltetrahydrofolate + NADPH. It catalyses the reaction (6R)-5,10-methenyltetrahydrofolate + H2O = (6R)-10-formyltetrahydrofolate + H(+). Its pathway is one-carbon metabolism; tetrahydrofolate interconversion. Catalyzes the oxidation of 5,10-methylenetetrahydrofolate to 5,10-methenyltetrahydrofolate and then the hydrolysis of 5,10-methenyltetrahydrofolate to 10-formyltetrahydrofolate. The chain is Bifunctional protein FolD from Chlamydia abortus (strain DSM 27085 / S26/3) (Chlamydophila abortus).